The primary structure comprises 287 residues: ATP synthase gamma chain (287 aa).

This sequence belongs to the ATPase gamma chain family. In terms of assembly, F-type ATPases have 2 components, CF(1) - the catalytic core - and CF(0) - the membrane proton channel. CF(1) has five subunits: alpha(3), beta(3), gamma(1), delta(1), epsilon(1). CF(0) has three main subunits: a, b and c.

Its subcellular location is the cell inner membrane. Functionally, produces ATP from ADP in the presence of a proton gradient across the membrane. The gamma chain is believed to be important in regulating ATPase activity and the flow of protons through the CF(0) complex. This is ATP synthase gamma chain from Geobacter sp. (strain M21).